The chain runs to 415 residues: Serine hydroxymethyltransferase (415 aa).

(6S)-5,6,7,8-tetrahydrofolate-binding positions include Leu-122 and 126-128; that span reads GHL. The residue at position 230 (Lys-230) is an N6-(pyridoxal phosphate)lysine.

This sequence belongs to the SHMT family. As to quaternary structure, homodimer. Requires pyridoxal 5'-phosphate as cofactor.

It localises to the cytoplasm. The enzyme catalyses (6R)-5,10-methylene-5,6,7,8-tetrahydrofolate + glycine + H2O = (6S)-5,6,7,8-tetrahydrofolate + L-serine. Its pathway is one-carbon metabolism; tetrahydrofolate interconversion. The protein operates within amino-acid biosynthesis; glycine biosynthesis; glycine from L-serine: step 1/1. Functionally, catalyzes the reversible interconversion of serine and glycine with tetrahydrofolate (THF) serving as the one-carbon carrier. This reaction serves as the major source of one-carbon groups required for the biosynthesis of purines, thymidylate, methionine, and other important biomolecules. Also exhibits THF-independent aldolase activity toward beta-hydroxyamino acids, producing glycine and aldehydes, via a retro-aldol mechanism. In Ralstonia pickettii (strain 12J), this protein is Serine hydroxymethyltransferase.